Consider the following 62-residue polypeptide: Conotoxin reg3.5 (62 aa).

An N-terminal signal peptide occupies residues 1 to 22 (MMFKLGVLLTICLLLFPLTGTA). Positions 23 to 49 (LDGDQLAEHMLDISSGINDRWFDPVRK) are excised as a propeptide. 3 cysteine pairs are disulfide-bonded: C50–C60, C51–C58, and C56–C61.

This sequence belongs to the conotoxin M superfamily. Expressed by the venom duct.

It localises to the secreted. The protein is Conotoxin reg3.5 of Conus regius (Crown cone).